A 255-amino-acid chain; its full sequence is 5-oxoprolinase subunit A (255 aa).

It belongs to the LamB/PxpA family. In terms of assembly, forms a complex composed of PxpA, PxpB and PxpC.

It catalyses the reaction 5-oxo-L-proline + ATP + 2 H2O = L-glutamate + ADP + phosphate + H(+). Functionally, catalyzes the cleavage of 5-oxoproline to form L-glutamate coupled to the hydrolysis of ATP to ADP and inorganic phosphate. In Campylobacter jejuni subsp. jejuni serotype O:6 (strain 81116 / NCTC 11828), this protein is 5-oxoprolinase subunit A.